We begin with the raw amino-acid sequence, 461 residues long: tRNA modification GTPase MnmE (461 aa).

Arg-23, Glu-88, and Arg-127 together coordinate (6S)-5-formyl-5,6,7,8-tetrahydrofolate. The region spanning 223–383 is the TrmE-type G domain; the sequence is GLNTVIVGKP…LKECIKNLFF (161 aa). Position 233 (Asn-233) interacts with K(+). GTP-binding positions include 233–238, 252–258, and 277–280; these read NVGKSS, TEIPGTT, and DTAG. A Mg(2+)-binding site is contributed by Ser-237. K(+)-binding residues include Thr-252, Ile-254, and Thr-257. Thr-258 is a binding site for Mg(2+). Residue Lys-461 coordinates (6S)-5-formyl-5,6,7,8-tetrahydrofolate.

Belongs to the TRAFAC class TrmE-Era-EngA-EngB-Septin-like GTPase superfamily. TrmE GTPase family. As to quaternary structure, homodimer. Heterotetramer of two MnmE and two MnmG subunits. It depends on K(+) as a cofactor.

It localises to the cytoplasm. Functionally, exhibits a very high intrinsic GTPase hydrolysis rate. Involved in the addition of a carboxymethylaminomethyl (cmnm) group at the wobble position (U34) of certain tRNAs, forming tRNA-cmnm(5)s(2)U34. The sequence is that of tRNA modification GTPase MnmE from Clostridium botulinum (strain Langeland / NCTC 10281 / Type F).